Consider the following 62-residue polypeptide: Large ribosomal subunit protein bL28 (62 aa).

This sequence belongs to the bacterial ribosomal protein bL28 family.

The sequence is that of Large ribosomal subunit protein bL28 from Caldicellulosiruptor bescii (strain ATCC BAA-1888 / DSM 6725 / KCTC 15123 / Z-1320) (Anaerocellum thermophilum).